The sequence spans 361 residues: Phosphoserine aminotransferase (361 aa).

L-glutamate is bound at residue Arg-42. Pyridoxal 5'-phosphate contacts are provided by residues Gly-76–Arg-77, Trp-102, Thr-154, Asp-173, and Gln-196. At Lys-197 the chain carries N6-(pyridoxal phosphate)lysine. Pyridoxal 5'-phosphate is bound at residue Asn-238–Thr-239.

It belongs to the class-V pyridoxal-phosphate-dependent aminotransferase family. SerC subfamily. Homodimer. Pyridoxal 5'-phosphate is required as a cofactor.

Its subcellular location is the cytoplasm. It carries out the reaction O-phospho-L-serine + 2-oxoglutarate = 3-phosphooxypyruvate + L-glutamate. The enzyme catalyses 4-(phosphooxy)-L-threonine + 2-oxoglutarate = (R)-3-hydroxy-2-oxo-4-phosphooxybutanoate + L-glutamate. The protein operates within amino-acid biosynthesis; L-serine biosynthesis; L-serine from 3-phospho-D-glycerate: step 2/3. It participates in cofactor biosynthesis; pyridoxine 5'-phosphate biosynthesis; pyridoxine 5'-phosphate from D-erythrose 4-phosphate: step 3/5. In terms of biological role, catalyzes the reversible conversion of 3-phosphohydroxypyruvate to phosphoserine and of 3-hydroxy-2-oxo-4-phosphonooxybutanoate to phosphohydroxythreonine. The sequence is that of Phosphoserine aminotransferase from Idiomarina loihiensis (strain ATCC BAA-735 / DSM 15497 / L2-TR).